A 162-amino-acid polypeptide reads, in one-letter code: Caveolin-2 (162 aa).

Over 1-86 (MGLETEKADA…FEVSKYLIYK (86 aa)) the chain is Cytoplasmic. Tyr19 carries the post-translational modification Phosphotyrosine; by SRC. Residues 19 to 40 (YSRHSGLGYPEPEKCAKSTQDR) form a disordered region. Ser20 and Ser23 each carry phosphoserine. The residue at position 27 (Tyr27) is a Phosphotyrosine; by SRC. The span at 29 to 40 (EPEKCAKSTQDR) shows a compositional bias: basic and acidic residues. Ser36 carries the post-translational modification Phosphoserine. The helical intramembrane region spans 87-107 (VLTVLLAIPLAFVAGILFATL). At 108–162 (SCLHIWIVVPFVKTCLMVLPSVQTVWHSITDGFIAPLYKSMGLIFSSISLRLSPE) the chain is on the cytoplasmic side.

It belongs to the caveolin family. Monomer or homodimer. Interacts with CAV1; the interaction forms a stable heterooligomeric complex that is required for targeting to lipid rafts and for caveolae formation. Tyrosine phosphorylated forms do not form heterooligomers with the Tyr-19-phosphorylated form existing as a monomer or dimer, and the Tyr-27-form as a monomer only. Interacts (tyrosine phosphorylated form) with the SH2 domain-containing proteins, RASA1, NCK1 and SRC. Interacts (tyrosine phosphorylated form) with INSR, the interaction (Tyr-27-phosphorylated form) is increased on insulin stimulation. Interacts (Tyr-19 phosphorylated form) with MAPK1 (phosphorylated form); the interaction, promoted by insulin, leads to nuclear location and MAPK1 activation. Interacts with STAT3; the interaction is increased on insulin-induced tyrosine phosphorylation leading to STAT activation. Phosphorylated on serine and tyrosine residues. CAV1 promotes phosphorylation on Ser-23 which then targets the complex to the plasma membrane, lipid rafts and caveolae. Phosphorylation on Ser-36 appears to modulate mitosis in endothelial cells. Phosphorylation on both Tyr-19 and Tyr-27 is required for insulin-induced 'Ser-727' phosphorylation of STAT3 and its activation. Phosphorylation on Tyr-19 is required for insulin-induced phosphorylation of MAPK1 and DNA binding of STAT3. Tyrosine phosphorylation is induced by both EGF and insulin (By. similarity).

It is found in the nucleus. The protein localises to the cytoplasm. Its subcellular location is the golgi apparatus membrane. It localises to the cell membrane. The protein resides in the membrane. It is found in the caveola. May act as a scaffolding protein within caveolar membranes. Interacts directly with G-protein alpha subunits and can functionally regulate their activity. Acts as an accessory protein in conjunction with CAV1 in targeting to lipid rafts and driving caveolae formation. The Ser-36 phosphorylated form has a role in modulating mitosis in endothelial cells. Positive regulator of cellular mitogenesis of the MAPK signaling pathway. Required for the insulin-stimulated nuclear translocation and activation of MAPK1 and STAT3, and the subsequent regulation of cell cycle progression. The polypeptide is Caveolin-2 (CAV2) (Didelphis virginiana (North American opossum)).